A 505-amino-acid polypeptide reads, in one-letter code: Facilitated trehalose transporter Tret1 (505 aa).

The Cytoplasmic segment spans residues 1–46 (MEMEIKDENLRNSVPFVRQLSTDSVKTKTEYDNEDGTPYKSTTQKL). Residues 47–67 (FLWTQLLAAFAVSVGSMNVGF) form a helical membrane-spanning segment. Over 68-91 (SSGYTSPAVLTMNITLDITKEEIT) the chain is Extracellular. The N-linked (GlcNAc...) asparagine glycan is linked to asparagine 80. The helical transmembrane segment at 92–112 (WVGGLMPLAALVGGIVGGPLI) threads the bilayer. Over 113–124 (EYLGRKKTIMGT) the chain is Cytoplasmic. The helical transmembrane segment at 125 to 145 (AVPFTIGWMLIANAINVVMVF) threads the bilayer. Topologically, residues 146–149 (AGRV) are extracellular. A helical membrane pass occupies residues 150–170 (ICGVCVGIVSLAFPVYIGETI). The Cytoplasmic portion of the chain corresponds to 171 to 175 (QPEVR). The chain crosses the membrane as a helical span at residues 176–196 (GALGLLPTAFGNTGILLAFLV). Residues 197 to 201 (GSYLD) are Extracellular-facing. A helical transmembrane segment spans residues 202-222 (WSNLAFFGAAIPVPFFLLMIL). Topologically, residues 223–286 (TPETPRWYVS…QLFSKRYLPA (64 aa)) are cytoplasmic. The helical transmembrane segment at 287–307 (VMISLGLMLFQQLTGINAVIF) threads the bilayer. Over 308–323 (YAASIFQMSGSSVDEN) the chain is Extracellular. The helical transmembrane segment at 324-344 (LASIIIGVVNFISTFIATMLI) threads the bilayer. The Cytoplasmic portion of the chain corresponds to 345–350 (DRLGRK). A helical membrane pass occupies residues 351–371 (VLLYISSVAMITTLLALGAYF). The Extracellular portion of the chain corresponds to 372 to 390 (YLKQNHIDVTAYGWLPLAC). The helical transmembrane segment at 391-411 (LVIYVLGFSIGFGPIPWLMLG) threads the bilayer. The Cytoplasmic segment spans residues 412–419 (EILPSKIR). A helical transmembrane segment spans residues 420–437 (GTAASLATGFNWTCTFIV). Residues 438 to 451 (TKTFQNIIDAIYMH) are Extracellular-facing. The chain crosses the membrane as a helical span at residues 452 to 472 (GTLWLFAVICIGGLLFVIFFV). Residues 473 to 505 (PETKGKSLEEIEMKLTSGSRRVRNISKQPENIC) are Cytoplasmic-facing.

It belongs to the major facilitator superfamily. Sugar transporter (TC 2.A.1.1) family. Trehalose transporter subfamily. As to expression, expressed in many larval tissues at a low level, moderate levels of expression are seen in testis and head and highest expression in muscle.

The protein resides in the cell membrane. In terms of biological role, high-capacity facilitative transporter for trehalose. Does not transport maltose, sucrose or lactose. Mediates the bidirectional transfer of trehalose. Responsible for the transport of trehalose synthesized in the fat body and the incorporation of trehalose into other tissues that require a carbon source, thereby regulating trehalose levels in the hemolymph. The sequence is that of Facilitated trehalose transporter Tret1 from Bombyx mori (Silk moth).